The chain runs to 737 residues: Cilium assembly protein DZIP1L (737 aa).

Residues 1–293 (MGFKGKYPQM…LKQSNEQFIQ (293 aa)) form an interaction with Rab8 region. Residues 98–132 (VTDLKEAHTTAQEEIATLRKSLSESNNEVVQLHKR) are a coiled coil. The C2H2-type zinc finger occupies 144 to 167 (YPCHLCTKNFISNEALNVHIGRKH). 5 disordered regions span residues 167-187 (HRVA…DRDK), 214-267 (ERNI…KEQL), 415-548 (SEFL…RKDA), 624-682 (KSPL…VSRD), and 698-737 (IRGA…DNLK). 2 stretches are compositionally biased toward basic and acidic residues: residues 244 to 266 (EPKE…RKEQ) and 415 to 438 (SEFL…KGSE). A compositionally biased stretch (polar residues) spans 457–469 (SAGSSDSNPTYTK). The segment covering 492-510 (SQEETENEEERSLTEEEGT) has biased composition (acidic residues). Residues 665–677 (SSEQQTRSPSPQR) are compositionally biased toward polar residues. A compositionally biased stretch (basic and acidic residues) spans 724 to 737 (EDGKSFNDSDDNLK).

This sequence belongs to the DZIP C2H2-type zinc-finger protein family. Component of a ciliary transition zone (TZ)-localized complex composed of DZIP1, Fam92 and Cby. Interacts directly with Cby. Interacts with Cep290 (via N-terminus). Interacts (via N-terminus) with Rab8. In terms of tissue distribution, in neurons of the second and third antennal segments, expressed at the tip of the dendrites.

The protein localises to the cytoplasm. Its subcellular location is the cytoskeleton. It is found in the microtubule organizing center. The protein resides in the centrosome. It localises to the centriole. The protein localises to the cilium basal body. Component of the DZIP1-Fam92-Cby complex which promotes ciliogenesis in sensory neurons and spermatocytes by acting downstream of Cep290 to initiate early ciliary membrane formation and thus transition zone (TZ) assembly. During spermatogenesis, also regulates distal elongation of the basal-body and their docking (anchoring) to the plasma membrane and as a consequence, regulates the initiation and proper elongation of axonemal microtubules. Within the complex, required to recruit or stabilize Rab8, Fam92 and Cby at the distal basal body of cilia to promote early ciliary membrane formation and initiate TZ assembly. Also acts with Fam92 to restrict Cep290 localization to the proximal part of the TZ. May also be involved in recruitment or stabilization of Mks1 at the TZ. The polypeptide is Cilium assembly protein DZIP1L (Drosophila melanogaster (Fruit fly)).